A 2346-amino-acid chain; its full sequence is N-benzoylphenylalaninol synthetase apmA (2346 aa).

The segment at 263–652 (ESAAQKSPDA…GRKDLQVKIR (390 aa)) is adenylation 1. One can recognise a Carrier 1 domain in the interval 784 to 860 (MPTTTTEMTL…DMAKAMTSTR (77 aa)). An O-(pantetheine 4'-phosphoryl)serine modification is found at S821. Residues 896–1306 (QDAYPCSPLQ…ISPQDKENLL (411 aa)) are condensation. Residues 1330–1713 (SQPNAPAICA…GRKDTQVKIR (384 aa)) are adenylation 2. Positions 1842-1924 (SALRASEDKA…GLAAFIDAEL (83 aa)) constitute a Carrier 2 domain. S1883 carries the O-(pantetheine 4'-phosphoryl)serine modification. A reductase (R) domain region spans residues 1960 to 2311 (VTGGTGFLGT…RNVQFLVEAG (352 aa)).

This sequence belongs to the NRP synthetase family.

It carries out the reaction benzoate + L-phenylalanine + 2 AH2 + 2 ATP = N-benzoyl-L-phenylalaninol + 2 A + 2 AMP + 2 diphosphate + H(+). It functions in the pathway secondary metabolite biosynthesis. Functionally, nonribosomal peptide synthase; part of the gene cluster that mediates the biosynthesis of asperphenamate, a rare linear amino acid ester that exhibits antitumor activity towards a number of cell lines. The structure of asperphenamate contains two subunits, N-benzoylphenylalanine and N-benzoylphenylalaninol, which are connected by an inter-molecular ester bond. The first step of asperphenamate biosynthesis is the generation of N-benzoylphenylalaninol by the nonribosomal peptide synthase apmA. Using phenylalanine and benzoic acid as substrates, apmA catalyzes amide bond formation and tethers the intermediate into the NRPS chain. Then, the terminal R domain of apmA catalyzes the reduction reaction to get the shunt product N-benzoylphenylalaninol. Subsequently, the nonribosomal peptide synthase apmB activates the same substrates as does apmA (phenylalanine and benzoic acid) to produce N-benzoylphenylalanine before condensing N-benzoylphenylalanine and N-benzoylphenylalaninol to release asperphenamate. The polypeptide is N-benzoylphenylalaninol synthetase apmA (Penicillium brevicompactum).